Here is a 340-residue protein sequence, read N- to C-terminus: MKKKLLVLTMSTLFATQLINSNHANASVTESVDKKFVVPESGINKIIPTYNEFKKAPKVNVSNLTDNKNFVASEDKLKKISDPSAASKIVDKNFVVPESKLGNIVPEYKEINNRVNVATNNPASQQVDKHFVAKGPEVNRFITQNKVNHHFITTQTHYKKVITSYKSTHVHKHVNHATDSINKHFIVKPSEAPRYTHPSQSLMINHYFAVPGYHAHKFVTPGHASIKINHFCVVPQINSFKVIPPYGHNSHRMHVPSFQNNTTATHQNAKVNKAYDYKYFYSYKVVKGVKKYFSFSQSNGYKIGKPSLNIKNVNYQYAVPSYSPTNYVPEFKGSLPAPRV.

The signal sequence occupies residues 1–26 (MKKKLLVLTMSTLFATQLINSNHANA).

The protein localises to the cell surface. Adhesin that binds to the host cell extracellular matrix proteins fibronectin, fibrinogen, collagen, and vitronectin. This Staphylococcus aureus protein is Extracellular matrix protein-binding protein emp (emp).